A 452-amino-acid polypeptide reads, in one-letter code: Tubulin beta-2 chain (452 aa).

8 residues coordinate GTP: Gln11, Glu74, Ser143, Val147, Thr148, Gly149, Asn209, and Asn231. Glu74 is a binding site for Mg(2+). The disordered stretch occupies residues 431-452 (QEATADDEAEFEEEGEVEGEYD). The segment covering 434 to 452 (TADDEAEFEEEGEVEGEYD) has biased composition (acidic residues).

This sequence belongs to the tubulin family. In terms of assembly, dimer of alpha and beta chains. A typical microtubule is a hollow water-filled tube with an outer diameter of 25 nm and an inner diameter of 15 nM. Alpha-beta heterodimers associate head-to-tail to form protofilaments running lengthwise along the microtubule wall with the beta-tubulin subunit facing the microtubule plus end conferring a structural polarity. Microtubules usually have 13 protofilaments but different protofilament numbers can be found in some organisms and specialized cells. Mg(2+) serves as cofactor.

The protein resides in the cytoplasm. Its subcellular location is the cytoskeleton. In terms of biological role, tubulin is the major constituent of microtubules, a cylinder consisting of laterally associated linear protofilaments composed of alpha- and beta-tubulin heterodimers. Microtubules grow by the addition of GTP-tubulin dimers to the microtubule end, where a stabilizing cap forms. Below the cap, tubulin dimers are in GDP-bound state, owing to GTPase activity of alpha-tubulin. The polypeptide is Tubulin beta-2 chain (Homarus americanus (American lobster)).